The sequence spans 101 residues: uncharacterized protein (101 aa).

3 helical membrane-spanning segments follow: residues 10-32 (FLPNFLLLGAGTALVLCLVFFLY), 45-67 (LGIWGSAVGLLMDTISLWNLPLI), and 77-99 (IAFTIWMVCAYCMYLLIPLILSH).

It localises to the cell membrane. This is an uncharacterized protein from Bacillus subtilis (strain 168).